We begin with the raw amino-acid sequence, 66 residues long: Large ribosomal subunit protein bL35 (66 aa).

The segment at 1–42 (MPKQKTHRASAKRFKRTANGGLKRHHAYTGHRFHGKTKKQRR) is disordered.

The protein belongs to the bacterial ribosomal protein bL35 family.

The sequence is that of Large ribosomal subunit protein bL35 from Lactobacillus gasseri (strain ATCC 33323 / DSM 20243 / BCRC 14619 / CIP 102991 / JCM 1131 / KCTC 3163 / NCIMB 11718 / NCTC 13722 / AM63).